A 211-amino-acid polypeptide reads, in one-letter code: BAG family molecular chaperone regulator 2 (211 aa).

At alanine 2 the chain carries N-acetylalanine. Phosphoserine is present on residues serine 20, serine 31, and serine 73. The stretch at 20-61 (SMADRSSRLLESLDQLELRVEALREAATAVEQEKEILLEMIH) forms a coiled coil. Residues 109–189 (SLKHATRIID…NIENSDKAIK (81 aa)) form the BAG domain.

In terms of assembly, binds to the ATPase domain of HSP/HSC70 chaperones. May interact with NWD1. Interacts with HSPA1A (via NBD), HSPA1B (via NBD) and HSPA8. May interact with DNJC9; the interaction seems to be histone-dependent.

Functionally, co-chaperone for HSP70 and HSC70 chaperone proteins. Acts as a nucleotide-exchange factor (NEF) promoting the release of ADP from the HSP70 and HSC70 proteins thereby triggering client/substrate protein release. This chain is BAG family molecular chaperone regulator 2 (BAG2), found in Homo sapiens (Human).